Consider the following 78-residue polypeptide: Acyl carrier protein (78 aa).

The 76-residue stretch at 2 to 77 (SDTVERVKKI…DAVKFIDKAS (76 aa)) folds into the Carrier domain. An O-(pantetheine 4'-phosphoryl)serine modification is found at S37.

Belongs to the acyl carrier protein (ACP) family. In terms of processing, 4'-phosphopantetheine is transferred from CoA to a specific serine of apo-ACP by AcpS. This modification is essential for activity because fatty acids are bound in thioester linkage to the sulfhydryl of the prosthetic group.

Its subcellular location is the cytoplasm. The protein operates within lipid metabolism; fatty acid biosynthesis. In terms of biological role, carrier of the growing fatty acid chain in fatty acid biosynthesis. This is Acyl carrier protein from Bartonella henselae (strain ATCC 49882 / DSM 28221 / CCUG 30454 / Houston 1) (Rochalimaea henselae).